We begin with the raw amino-acid sequence, 778 residues long: Lon protease (778 aa).

Positions 4 to 187 (LPVLPLTDAV…LLVGWVRAHL (184 aa)) constitute a Lon N-terminal domain. 346–353 (GPPGVGKT) contributes to the ATP binding site. The Lon proteolytic domain maps to 581–762 (TAVPGVATGL…ADVLALALRP (182 aa)). Catalysis depends on residues S668 and K711.

It belongs to the peptidase S16 family. As to quaternary structure, homohexamer. Organized in a ring with a central cavity.

The protein resides in the cytoplasm. It catalyses the reaction Hydrolysis of proteins in presence of ATP.. Functionally, ATP-dependent serine protease that mediates the selective degradation of mutant and abnormal proteins as well as certain short-lived regulatory proteins. Required for cellular homeostasis and for survival from DNA damage and developmental changes induced by stress. Degrades polypeptides processively to yield small peptide fragments that are 5 to 10 amino acids long. Binds to DNA in a double-stranded, site-specific manner. The sequence is that of Lon protease from Salinispora arenicola (strain CNS-205).